A 195-amino-acid chain; its full sequence is Protein LIGHT-DEPENDENT SHORT HYPOCOTYLS 4 (195 aa).

Over residues 28–38 (TTTSSSSSSSS) the composition is skewed to low complexity. 2 disordered regions span residues 28–51 (TTTS…RYEN) and 162–195 (SQAK…SSPN). The ALOG domain occupies 48–175 (RYENQKRRDW…ARGISYEKKK (128 aa)). The Nuclear localization signal signature appears at 173–177 (KKKRK).

It belongs to the plant homeotic and developmental regulators ALOG protein family. In terms of tissue distribution, induced by NAC054/CUC1 and NAC098/CUC2 in shoot organ boundary cells.

The protein resides in the nucleus. Functionally, probable transcription regulator that acts as a developmental regulator by promoting cell growth in response to light. May suppress organ differentiation in the boundary region. The polypeptide is Protein LIGHT-DEPENDENT SHORT HYPOCOTYLS 4 (LSH4) (Arabidopsis thaliana (Mouse-ear cress)).